A 602-amino-acid chain; its full sequence is Elongation factor 4 (602 aa).

The tr-type G domain occupies 7 to 189 (KHIRNFSIVA…AIVDKIPSPQ (183 aa)). GTP is bound by residues 19–24 (DHGKST) and 136–139 (NKID).

Belongs to the TRAFAC class translation factor GTPase superfamily. Classic translation factor GTPase family. LepA subfamily.

The protein resides in the cell membrane. The catalysed reaction is GTP + H2O = GDP + phosphate + H(+). Functionally, required for accurate and efficient protein synthesis under certain stress conditions. May act as a fidelity factor of the translation reaction, by catalyzing a one-codon backward translocation of tRNAs on improperly translocated ribosomes. Back-translocation proceeds from a post-translocation (POST) complex to a pre-translocation (PRE) complex, thus giving elongation factor G a second chance to translocate the tRNAs correctly. Binds to ribosomes in a GTP-dependent manner. The protein is Elongation factor 4 of Clostridium kluyveri (strain ATCC 8527 / DSM 555 / NBRC 12016 / NCIMB 10680 / K1).